Consider the following 93-residue polypeptide: DNA-directed RNA polymerase subunit omega (93 aa).

Belongs to the RNA polymerase subunit omega family. The RNAP catalytic core consists of 2 alpha, 1 beta, 1 beta' and 1 omega subunit. When a sigma factor is associated with the core the holoenzyme is formed, which can initiate transcription.

The catalysed reaction is RNA(n) + a ribonucleoside 5'-triphosphate = RNA(n+1) + diphosphate. Its function is as follows. Promotes RNA polymerase assembly. Latches the N- and C-terminal regions of the beta' subunit thereby facilitating its interaction with the beta and alpha subunits. This is DNA-directed RNA polymerase subunit omega from Corynebacterium urealyticum (strain ATCC 43042 / DSM 7109).